The sequence spans 343 residues: Outer envelope pore protein 37, chloroplastic (343 aa).

Polar residues-rich tracts occupy residues 1-11 (MADPSSQNPNL) and 23-43 (THQIQSGTSELSPPSRPPCST). Positions 1-43 (MADPSSQNPNLATPPPPSSPSPTHQIQSGTSELSPPSRPPCST) are disordered. The N-terminal 73 residues, 1 to 73 (MADPSSQNPN…DSLLFLNKVS (73 aa)), are a transit peptide targeting the chloroplast. Over 74–76 (CKL) the chain is Cytoplasmic. Residues 77–86 (FDNLAKLKLS) traverse the membrane as a beta stranded segment. At 87–103 (FQNNSQREISQPQVSFT) the chain is on the chloroplast intermembrane side. The chain crosses the membrane as a beta stranded span at residues 104–113 (SKHVSVLYDV). Residues 114-129 (EEKNTFIKSTLDVHPR) are Cytoplasmic-facing. The chain crosses the membrane as a beta stranded span at residues 130–137 (LQLRALHN). The Chloroplast intermembrane portion of the chain corresponds to 138 to 154 (VKAQQGEVAMEANLTEP). Residues 155–164 (GYSLELSSPV) form a beta stranded membrane-spanning segment. Topologically, residues 165 to 169 (PIGYP) are cytoplasmic. The chain crosses the membrane as a beta stranded span at residues 170 to 178 (RATLKFPLG). Over 179 to 219 (EISLQEKDEEEEEKQKRTLSVNGILKRQVMNGVCTALYTDE) the chain is Chloroplast intermembrane. A beta stranded transmembrane segment spans residues 220-228 (ELRLRYAYK). Residues 229–230 (DD) are Cytoplasmic-facing. The beta stranded transmembrane segment at 231–240 (ALSFIPSISL) threads the bilayer. P241 is a topological domain (chloroplast intermembrane). A beta stranded membrane pass occupies residues 242–250 (SNAASFAFK). Residues 251-257 (RRFSPSD) lie on the Cytoplasmic side of the membrane. The beta stranded transmembrane segment at 258–267 (KLSYWYNFDS) threads the bilayer. Residues 268-269 (NM) are Chloroplast intermembrane-facing. The beta stranded transmembrane segment at 270–279 (WSAVYKRTYG) threads the bilayer. The Cytoplasmic segment spans residues 280-286 (KDYKLKA). The chain crosses the membrane as a beta stranded span at residues 287-296 (GYDSDVRLGW). The Chloroplast intermembrane portion of the chain corresponds to 297–316 (ASLWVGDEAGKVKTTPMKMK). Residues 317–326 (VQFMLQVPQD) traverse the membrane as a beta stranded segment. At 327–343 (DIKSSVLMFRVKKRWDI) the chain is on the cytoplasmic side.

Belongs to the plastid outer envelope porin OEP37 (TC 1.B.47) family. Forms an hourglass-shaped multimeric complex. Ubiquitously expressed at low levels. Mostly present in cotyledons, and accumulates in seedlings and embryos.

It is found in the plastid. It localises to the chloroplast outer membrane. Functionally, voltage-dependent peptide-sensitive high conductance rectifying cation channel with a strong affinity for TIC32 that is imported into the chloroplast. Conductance is pH-dependent decreasing with decreasing pH values. This is Outer envelope pore protein 37, chloroplastic (OEP37) from Arabidopsis thaliana (Mouse-ear cress).